A 284-amino-acid chain; its full sequence is 2-dehydro-3-deoxyphosphooctonate aldolase (284 aa).

Belongs to the KdsA family.

Its subcellular location is the cytoplasm. The catalysed reaction is D-arabinose 5-phosphate + phosphoenolpyruvate + H2O = 3-deoxy-alpha-D-manno-2-octulosonate-8-phosphate + phosphate. It participates in carbohydrate biosynthesis; 3-deoxy-D-manno-octulosonate biosynthesis; 3-deoxy-D-manno-octulosonate from D-ribulose 5-phosphate: step 2/3. The protein operates within bacterial outer membrane biogenesis; lipopolysaccharide biosynthesis. This is 2-dehydro-3-deoxyphosphooctonate aldolase from Methylobacterium radiotolerans (strain ATCC 27329 / DSM 1819 / JCM 2831 / NBRC 15690 / NCIMB 10815 / 0-1).